A 469-amino-acid polypeptide reads, in one-letter code: Diacetylchitobiose binding protein NgcE (469 aa).

Residues methionine 1–aspartate 37 constitute a signal peptide (tat-type signal). The interval cysteine 30 to phenylalanine 54 is disordered. Residues serine 35–lysine 48 show a composition bias toward basic and acidic residues.

The protein belongs to the bacterial solute-binding protein 1 family. As to quaternary structure, the complex is composed of two ATP-binding proteins (MsiK), two transmembrane proteins (NgcF and NgcG) and a solute-binding protein (NgcE). In terms of processing, predicted to be exported by the Tat system. The position of the signal peptide cleavage has not been experimentally proven.

The protein localises to the cell membrane. In terms of biological role, part of the ABC transporter complex NgcEFG-MsiK involved in N,N'-diacetylchitobiose ((GlcNAc)2) uptake. Binds (GlcNAc)2. Can also bind GlcNAc. The protein is Diacetylchitobiose binding protein NgcE of Streptomyces coelicolor (strain ATCC BAA-471 / A3(2) / M145).